We begin with the raw amino-acid sequence, 160 residues long: Cytochrome b6-f complex subunit 4 (160 aa).

3 helical membrane-spanning segments follow: residues 36-56 (LLYI…GLSV), 95-115 (LLGV…PFIE), and 131-151 (TLFL…TLPI).

The protein belongs to the cytochrome b family. PetD subfamily. In terms of assembly, the 4 large subunits of the cytochrome b6-f complex are cytochrome b6, subunit IV (17 kDa polypeptide, petD), cytochrome f and the Rieske protein, while the 4 small subunits are petG, petL, petM and petN. The complex functions as a dimer.

It localises to the plastid. The protein resides in the chloroplast thylakoid membrane. Its function is as follows. Component of the cytochrome b6-f complex, which mediates electron transfer between photosystem II (PSII) and photosystem I (PSI), cyclic electron flow around PSI, and state transitions. The polypeptide is Cytochrome b6-f complex subunit 4 (Tetradesmus obliquus (Green alga)).